Here is a 203-residue protein sequence, read N- to C-terminus: 2-phospho-L-lactate guanylyltransferase (203 aa).

Belongs to the CofC family. Homodimer.

It carries out the reaction (2S)-2-phospholactate + GTP + H(+) = (2S)-lactyl-2-diphospho-5'-guanosine + diphosphate. Its pathway is cofactor biosynthesis; coenzyme F420 biosynthesis. Functionally, guanylyltransferase that catalyzes the activation of (2S)-2-phospholactate (2-PL) as (2S)-lactyl-2-diphospho-5'-guanosine, via the condensation of 2-PL with GTP. It is involved in the biosynthesis of coenzyme F420, a hydride carrier cofactor. This chain is 2-phospho-L-lactate guanylyltransferase, found in Halomicrobium mukohataei (strain ATCC 700874 / DSM 12286 / JCM 9738 / NCIMB 13541) (Haloarcula mukohataei).